The sequence spans 352 residues: NAD-dependent protein deacetylase sirtuin-2 (352 aa).

Residue serine 16 is modified to Phosphoserine. One can recognise a Deacetylase sirtuin-type domain in the interval 20–301 (RLLDELTLEG…LALAELLGWK (282 aa)). NAD(+) contacts are provided by residues 48–52 (AGIST) and 58–60 (DFR). Serine 63 carries the phosphoserine modification. 130 to 133 (QNID) is a binding site for NAD(+). Residue histidine 150 is the Proton acceptor of the active site. The Zn(2+) site is built by cysteine 158 and cysteine 163. Phosphoserine is present on serine 170. Positions 184 and 187 each coordinate Zn(2+). NAD(+) contacts are provided by residues 225–226 (TS), 249–251 (NKE), and cysteine 287. Residues 314 to 352 (SIDAQSGAGVPNPSTSASPKKSPPPAKDEARTTEREKPQ) are disordered. The span at 324–333 (PNPSTSASPK) shows a compositional bias: low complexity. Serine 331 and serine 335 each carry phosphoserine. Residues 339-352 (AKDEARTTEREKPQ) show a composition bias toward basic and acidic residues.

It belongs to the sirtuin family. Class I subfamily. As to quaternary structure, interacts with CDC20, FOXO3 and FZR1. Associates with microtubules in primary cortical mature neurons. Homotrimer. Interacts (via both phosphorylated, unphosphorylated, active or inactive forms) with HDAC6; the interaction is necessary for the complex to interact with alpha-tubulin, suggesting that these proteins belong to a large complex that deacetylates the cytoskeleton. Interacts with FOXO1; the interaction is disrupted upon serum-starvation or oxidative stress, leading to increased level of acetylated FOXO1 and induction of autophagy. Interacts with RELA; the interaction occurs in the cytoplasm and is increased in a TNF-alpha-dependent manner. Interacts with HOXA10; the interaction is direct. Interacts with YWHAB and YWHAG; the interactions occur in a AKT-dependent manner and increase SIRT2-dependent TP53 deacetylation. Interacts with MAPK1/ERK2 and MAPK3/ERK1; the interactions increase SIRT2 stability and deacetylation activity. Interacts (phosphorylated form) with KMT5A isoform 2; the interaction is direct, stimulates KMT5A-mediated methyltransferase activity on histone at 'Lys-20' (H4K20me1) and is increased in a H(2)O(2)-induced oxidative stress-dependent manner. Interacts with G6PD; the interaction is enhanced by H(2)O(2) treatment. Interacts with a G1/S-specific cyclin E-CDK2 complex. Interacts with AURKA, CDK5R1 (p35 form) and CDK5 and HIF1A. Interacts with the tRNA ligase SARS1; recruited to the VEGFA promoter via interaction with SARS1. Interacts with BEX4; negatively regulates alpha-tubulin deacetylation by SIRT2. Interacts with MORN3; the interaction enhances the ubiquitination of p53/TP53. Requires Zn(2+) as cofactor. Post-translationally, phosphorylated at phosphoserine and phosphothreonine. Phosphorylated at Ser-331 by a mitotic kinase CDK1/cyclin B at the G2/M transition; phosphorylation regulates the delay in cell-cycle progression. Phosphorylated at Ser-331 by a mitotic kinase G1/S-specific cyclin E/Cdk2 complex; phosphorylation inactivates SIRT2-mediated alpha-tubulin deacetylation and thereby negatively regulates cell adhesion, cell migration and neurite outgrowth during neuronal differentiation. Phosphorylated by cyclin A/Cdk2 and p35-Cdk5 complexes and to a lesser extent by the cyclin D3/Cdk4 and cyclin B/Cdk1, in vitro. Dephosphorylated at Ser-331 by CDC14A and CDC14B around early anaphase. In terms of processing, acetylated by EP300; acetylation leads both to the decreased of SIRT2-mediated alpha-tubulin deacetylase activity and SIRT2-mediated down-regulation of TP53 transcriptional activity. Ubiquitinated.

It localises to the nucleus. Its subcellular location is the cytoplasm. It is found in the perinuclear region. The protein resides in the cytoskeleton. The protein localises to the microtubule organizing center. It localises to the centrosome. Its subcellular location is the centriole. It is found in the spindle. The protein resides in the midbody. The protein localises to the chromosome. It localises to the perikaryon. Its subcellular location is the cell projection. It is found in the growth cone. The protein resides in the myelin membrane. It catalyses the reaction N(6)-acetyl-L-lysyl-[protein] + NAD(+) + H2O = 2''-O-acetyl-ADP-D-ribose + nicotinamide + L-lysyl-[protein]. The catalysed reaction is N(6)-tetradecanoyl-L-lysyl-[protein] + NAD(+) + H2O = 2''-O-tetradecanoyl-ADP-D-ribose + nicotinamide + L-lysyl-[protein]. The enzyme catalyses N(6)-hexadecanoyl-L-lysyl-[protein] + NAD(+) + H2O = 2''-O-hexadecanoyl-ADP-D-ribose + nicotinamide + L-lysyl-[protein]. Its activity is regulated as follows. Inhibited by Sirtinol, A3 and M15 small molecules. Inhibited by nicotinamide. Inhibited by a macrocyclic peptide inhibitor S2iL5. Inhibited by EP300-induced acetylation. Its function is as follows. NAD-dependent protein deacetylase, which deacetylates internal lysines on histone and alpha-tubulin as well as many other proteins such as key transcription factors. Participates in the modulation of multiple and diverse biological processes such as cell cycle control, genomic integrity, microtubule dynamics, cell differentiation, metabolic networks, and autophagy. Plays a major role in the control of cell cycle progression and genomic stability. Functions in the antephase checkpoint preventing precocious mitotic entry in response to microtubule stress agents, and hence allowing proper inheritance of chromosomes. Positively regulates the anaphase promoting complex/cyclosome (APC/C) ubiquitin ligase complex activity by deacetylating CDC20 and FZR1, then allowing progression through mitosis. Associates both with chromatin at transcriptional start sites (TSSs) and enhancers of active genes. Plays a role in cell cycle and chromatin compaction through epigenetic modulation of the regulation of histone H4 'Lys-20' methylation (H4K20me1) during early mitosis. Specifically deacetylates histone H4 at 'Lys-16' (H4K16ac) between the G2/M transition and metaphase enabling H4K20me1 deposition by KMT5A leading to ulterior levels of H4K20me2 and H4K20me3 deposition throughout cell cycle, and mitotic S-phase progression. Deacetylates KMT5A modulating KMT5A chromatin localization during the mitotic stress response. Also deacetylates histone H3 at 'Lys-57' (H3K56ac) during the mitotic G2/M transition. During oocyte meiosis progression, may deacetylate histone H4 at 'Lys-16' (H4K16ac) and alpha-tubulin, regulating spindle assembly and chromosome alignment by influencing microtubule dynamics and kinetochore function. Deacetylates histone H4 at 'Lys-16' (H4K16ac) at the VEGFA promoter and thereby contributes to regulate expression of VEGFA, a key regulator of angiogenesis. Deacetylates alpha-tubulin at 'Lys-40' and hence controls neuronal motility, oligodendroglial cell arbor projection processes and proliferation of non-neuronal cells. Phosphorylation at Ser-368 by a G1/S-specific cyclin E-CDK2 complex inactivates SIRT2-mediated alpha-tubulin deacetylation, negatively regulating cell adhesion, cell migration and neurite outgrowth during neuronal differentiation. Deacetylates PARD3 and participates in the regulation of Schwann cell peripheral myelination formation during early postnatal development and during postinjury remyelination. Involved in several cellular metabolic pathways. Plays a role in the regulation of blood glucose homeostasis by deacetylating and stabilizing phosphoenolpyruvate carboxykinase PCK1 activity in response to low nutrient availability. Acts as a key regulator in the pentose phosphate pathway (PPP) by deacetylating and activating the glucose-6-phosphate G6PD enzyme, and therefore, stimulates the production of cytosolic NADPH to counteract oxidative damage. Maintains energy homeostasis in response to nutrient deprivation as well as energy expenditure by inhibiting adipogenesis and promoting lipolysis. Attenuates adipocyte differentiation by deacetylating and promoting FOXO1 interaction to PPARG and subsequent repression of PPARG-dependent transcriptional activity. Plays a role in the regulation of lysosome-mediated degradation of protein aggregates by autophagy in neuronal cells. Deacetylates FOXO1 in response to oxidative stress or serum deprivation, thereby negatively regulating FOXO1-mediated autophagy. Deacetylates a broad range of transcription factors and co-regulators regulating target gene expression. Deacetylates transcriptional factor FOXO3 stimulating the ubiquitin ligase SCF(SKP2)-mediated FOXO3 ubiquitination and degradation. Deacetylates HIF1A and therefore promotes HIF1A degradation and inhibition of HIF1A transcriptional activity in tumor cells in response to hypoxia. Deacetylates RELA in the cytoplasm inhibiting NF-kappaB-dependent transcription activation upon TNF-alpha stimulation. Inhibits transcriptional activation by deacetylating p53/TP53 and EP300. Also deacetylates EIF5A. Functions as a negative regulator on oxidative stress-tolerance in response to anoxia-reoxygenation conditions. Plays a role as tumor suppressor. In addition to protein deacetylase activity, also has activity toward long-chain fatty acyl groups and mediates protein-lysine demyristoylation and depalmitoylation of target proteins, such as ARF6 and KRAS, thereby regulating their association with membranes. The chain is NAD-dependent protein deacetylase sirtuin-2 (SIRT2) from Pongo abelii (Sumatran orangutan).